Reading from the N-terminus, the 113-residue chain is uncharacterized protein (113 aa).

The protein to H.influenzae HI_1053 and P.denitrificans COX locus Uncharacterized protein 4.

This is an uncharacterized protein from Cupriavidus necator (strain ATCC 17699 / DSM 428 / KCTC 22496 / NCIMB 10442 / H16 / Stanier 337) (Ralstonia eutropha).